The following is a 295-amino-acid chain: Outer surface protein B (295 aa).

The N-terminal stretch at 1–16 (MKQYLLGFTLVFALIA) is a signal peptide. A lipid anchor (N-palmitoyl cysteine) is attached at cysteine 17. The S-diacylglycerol cysteine moiety is linked to residue cysteine 17.

It localises to the cell outer membrane. The protein is Outer surface protein B (ospB) of Borreliella burgdorferi (Lyme disease spirochete).